A 129-amino-acid polypeptide reads, in one-letter code: Small ribosomal subunit protein uS9 (129 aa).

It belongs to the universal ribosomal protein uS9 family.

This Helicobacter pylori (strain Shi470) protein is Small ribosomal subunit protein uS9.